The following is a 282-amino-acid chain: Putative hydrolase Bmul_3283/BMULJ_05242 (282 aa).

Mg(2+)-binding residues include Glu124, Glu126, and Asp155.

The protein belongs to the FAH family. It depends on Mg(2+) as a cofactor.

This Burkholderia multivorans (strain ATCC 17616 / 249) protein is Putative hydrolase Bmul_3283/BMULJ_05242.